We begin with the raw amino-acid sequence, 763 residues long: Phosphoglycerol transferase I (763 aa).

The next 4 helical transmembrane spans lie at 1 to 21, 26 to 46, 77 to 97, and 108 to 128; these read MSEL…AWKA, WWFA…ITLY, ILPG…LGWV, and VGYS…SPAF.

It belongs to the OpgB family.

The protein resides in the cell inner membrane. It carries out the reaction a phosphatidylglycerol + a membrane-derived-oligosaccharide D-glucose = a 1,2-diacyl-sn-glycerol + a membrane-derived-oligosaccharide 6-(glycerophospho)-D-glucose.. It participates in glycan metabolism; osmoregulated periplasmic glucan (OPG) biosynthesis. Functionally, transfers a phosphoglycerol residue from phosphatidylglycerol to the membrane-bound nascent glucan backbones. The chain is Phosphoglycerol transferase I from Salmonella schwarzengrund (strain CVM19633).